We begin with the raw amino-acid sequence, 204 residues long: UPF0637 protein lmo1065 (204 aa).

This sequence belongs to the UPF0637 family.

This Listeria monocytogenes serovar 1/2a (strain ATCC BAA-679 / EGD-e) protein is UPF0637 protein lmo1065.